Here is a 180-residue protein sequence, read N- to C-terminus: Centromere protein M (180 aa).

As to quaternary structure, component of the CENPA-NAC complex, at least composed of CENPA, CENPC, CENPH, CENPM, CENPN, CENPT and CENPU. The CENPA-NAC complex interacts with the CENPA-CAD complex, composed of CENPI, CENPK, CENPL, CENPO, CENPP, CENPQ, CENPR and CENPS.

Its subcellular location is the nucleus. It is found in the cytoplasm. The protein resides in the chromosome. It localises to the centromere. The protein localises to the kinetochore. Functionally, component of the CENPA-NAC (nucleosome-associated) complex, a complex that plays a central role in assembly of kinetochore proteins, mitotic progression and chromosome segregation. The CENPA-NAC complex recruits the CENPA-CAD (nucleosome distal) complex and may be involved in incorporation of newly synthesized CENPA into centromeres. In Bos taurus (Bovine), this protein is Centromere protein M (CENPM).